The primary structure comprises 82 residues: Cytochrome b559 subunit alpha (82 aa).

The chain crosses the membrane as a helical span at residues 22 to 36; sequence VIHFVTLPSIFLAGF. His24 is a heme binding site.

The protein belongs to the PsbE/PsbF family. In terms of assembly, heterodimer of an alpha subunit and a beta subunit. PSII is composed of 1 copy each of membrane proteins PsbA, PsbB, PsbC, PsbD, PsbE, PsbF, PsbH, PsbI, PsbJ, PsbK, PsbL, PsbM, PsbT, PsbX, PsbY, PsbZ, Psb30/Ycf12, peripheral proteins PsbO, CyanoQ (PsbQ), PsbU, PsbV and a large number of cofactors. It forms dimeric complexes. Heme b serves as cofactor.

The protein resides in the cellular thylakoid membrane. Its function is as follows. This b-type cytochrome is tightly associated with the reaction center of photosystem II (PSII). PSII is a light-driven water:plastoquinone oxidoreductase that uses light energy to abstract electrons from H(2)O, generating O(2) and a proton gradient subsequently used for ATP formation. It consists of a core antenna complex that captures photons, and an electron transfer chain that converts photonic excitation into a charge separation. The chain is Cytochrome b559 subunit alpha from Parasynechococcus marenigrum (strain WH8102).